The following is a 225-amino-acid chain: Polyadenylate-binding protein 2 (225 aa).

Residues 1-36 (MADEDISLNEDQLLESMEETNGEQETEIVTETEEEG) are compositionally biased toward acidic residues. The tract at residues 1 to 42 (MADEDISLNEDQLLESMEETNGEQETEIVTETEEEGSMQIDP) is disordered. Residues 14–74 (LESMEETNGE…QSEVDKQMAG (61 aa)) are a coiled coil. The RRM domain maps to 96 to 173 (RSVYVGNVDY…RQIKVMSKRT (78 aa)).

Its subcellular location is the nucleus. The protein localises to the cytoplasm. Involved in the 3'-end formation of mRNA precursors (pre-mRNA) by the addition of a poly(A) tail of 200-250 nt to the upstream cleavage product. Stimulates poly(A) polymerase (PAPOLA) conferring processivity on the poly(A) tail elongation reaction and also controls the poly(A) tail length. Increases the affinity of poly(A) polymerase for RNA. Binds to poly(A) and to poly(G) with high affinity. May protect the poly(A) tail from degradation. The protein is Polyadenylate-binding protein 2 of Drosophila pseudoobscura pseudoobscura (Fruit fly).